A 409-amino-acid chain; its full sequence is MNVSAIVVEYNPMHNGHLYHIKKTKKLTNCDALVCIMSGNFVQRGFPSILDKWTKANMAISNGVDLVIELPTLYSLSSAEFFSFGAVSILDSLNIINSICFGSEIGNINALQDIATTLLEEPLEYKILLKNYLDKGISFAKARNLALVELNRDNKIMSENINKILSLSNNILGIEYLKSLLLLNSSIKPFTITREGADYKDENLHEEYSSASSIRKYLKENKNINILKDFLPLEGFLEFKRLITKGYNFSMEDSMINYIRYKYISGYKNLHNLIDVSEGLDNRIYKSLEKNFTYDSLVGEIKSKRYAYSRIGRILCQYFIGFENYDLNSLLKSTPNYMRVLASNEMGLKVLKKIKKHSSTNIYTKLPKNTNTLLSLDIKATNAYSLLNNNIRFNEDYFRSPTIIKNTIY.

ATP contacts are provided by residues 7 to 20, G102, N169, and R194; that span reads VVEYNPMHNGHLYH.

The protein belongs to the TmcAL family.

The protein resides in the cytoplasm. The catalysed reaction is cytidine(34) in elongator tRNA(Met) + acetate + ATP = N(4)-acetylcytidine(34) in elongator tRNA(Met) + AMP + diphosphate. Catalyzes the formation of N(4)-acetylcytidine (ac(4)C) at the wobble position of elongator tRNA(Met), using acetate and ATP as substrates. First activates an acetate ion to form acetyladenylate (Ac-AMP) and then transfers the acetyl group to tRNA to form ac(4)C34. This is tRNA(Met) cytidine acetate ligase from Clostridium botulinum (strain ATCC 19397 / Type A).